A 494-amino-acid polypeptide reads, in one-letter code: Caspase-8 (494 aa).

Positions 1–242 (MAGSNLLIHL…QEIESDNQQS (242 aa)) are excised as a propeptide. Catalysis depends on residues His345 and Cys386. The propeptide occupies 401–410 (RIDVTTVSPD).

Belongs to the peptidase C14A family. As to quaternary structure, heterotetramer that consists of two anti-parallel arranged heterodimers, each one formed by a 15 kDa (caspase-8 subunit p15) and a 10 kDa (caspase-8 subunit p10) subunit. Interacts (via N-terminus) with Diap2; likely to bind Diap2 simultaneously with Fadd to form a trimeric complex. Interacts with Dark (via N-terminus). Post-translationally, polyubiquitinated by Diap2 following activation of the immune deficiency (Imd) pathway. As to expression, constitutively expressed in fat bodies of larvae and adults.

The protein localises to the cytoplasm. It carries out the reaction Strict requirement for Asp at position P1 and has a preferred cleavage sequence of (Leu/Asp/Val)-Glu-Thr-Asp-|-(Gly/Ser/Ala).. In terms of biological role, effector of the programmed cell death (PCD) activators rpr, grim and hid. May play an apoptotic role in the germline as well as soma. Fadd interacts with Dredd to promote cleavage of Dredd and is necessary and sufficient for enhancing Dredd-induced apoptosis. Plays a role in the innate immune response. Required for resistance to Gram-negative bacterial infection. Diap2-mediated ubiquitination of Dredd is critical for processing of imd and rel and the subsequent expression of antimicrobial genes such as DptA. This chain is Caspase-8, found in Drosophila melanogaster (Fruit fly).